Here is a 140-residue protein sequence, read N- to C-terminus: Large-conductance mechanosensitive channel (140 aa).

Transmembrane regions (helical) follow at residues 16–36 (VVDLAVGVIIGAAFGKIVDSI) and 86–106 (GSFLTIVLNFLILAFIIFLMV).

Belongs to the MscL family. As to quaternary structure, homopentamer.

Its subcellular location is the cell inner membrane. Functionally, channel that opens in response to stretch forces in the membrane lipid bilayer. May participate in the regulation of osmotic pressure changes within the cell. In Anaeromyxobacter sp. (strain K), this protein is Large-conductance mechanosensitive channel.